The primary structure comprises 358 residues: UDP-N-acetylglucosamine--N-acetylmuramyl-(pentapeptide) pyrophosphoryl-undecaprenol N-acetylglucosamine transferase (358 aa).

UDP-N-acetyl-alpha-D-glucosamine-binding residues include Ser-197 and Gln-288.

This sequence belongs to the glycosyltransferase 28 family. MurG subfamily.

The protein localises to the cell membrane. It carries out the reaction Mur2Ac(oyl-L-Ala-gamma-D-Glu-L-Lys-D-Ala-D-Ala)-di-trans,octa-cis-undecaprenyl diphosphate + UDP-N-acetyl-alpha-D-glucosamine = beta-D-GlcNAc-(1-&gt;4)-Mur2Ac(oyl-L-Ala-gamma-D-Glu-L-Lys-D-Ala-D-Ala)-di-trans,octa-cis-undecaprenyl diphosphate + UDP + H(+). It participates in cell wall biogenesis; peptidoglycan biosynthesis. Cell wall formation. Catalyzes the transfer of a GlcNAc subunit on undecaprenyl-pyrophosphoryl-MurNAc-pentapeptide (lipid intermediate I) to form undecaprenyl-pyrophosphoryl-MurNAc-(pentapeptide)GlcNAc (lipid intermediate II). The protein is UDP-N-acetylglucosamine--N-acetylmuramyl-(pentapeptide) pyrophosphoryl-undecaprenol N-acetylglucosamine transferase of Streptococcus agalactiae serotype Ia (strain ATCC 27591 / A909 / CDC SS700).